Consider the following 125-residue polypeptide: Monothiol glutaredoxin-S2 (125 aa).

A Glutaredoxin domain is found at 28 to 124 (AERVGRLVRE…PRLREVGALC (97 aa)). Cysteine 48 contacts [2Fe-2S] cluster.

This sequence belongs to the glutaredoxin family. CC-type subfamily.

It localises to the cytoplasm. In terms of biological role, may only reduce GSH-thiol disulfides, but not protein disulfides. The protein is Monothiol glutaredoxin-S2 (GRXS2) of Oryza sativa subsp. japonica (Rice).